The chain runs to 539 residues: CTP synthase (539 aa).

The segment at 1–267 (MTKYIFVTGG…DQKVCDFLHL (267 aa)) is amidoligase domain. Ser-13 serves as a coordination point for CTP. Residue Ser-13 coordinates UTP. 14 to 19 (SLGKGI) is an ATP binding site. Residue Tyr-54 participates in L-glutamine binding. Asp-71 contributes to the ATP binding site. Positions 71 and 141 each coordinate Mg(2+). CTP is bound by residues 148–150 (DIE), 188–193 (KTKPTQ), and Lys-224. Residues 188 to 193 (KTKPTQ) and Lys-224 each bind UTP. A Glutamine amidotransferase type-1 domain is found at 294–537 (KITLVGKYVE…IGAASGLPAQ (244 aa)). Gly-356 contributes to the L-glutamine binding site. Cys-383 serves as the catalytic Nucleophile; for glutamine hydrolysis. L-glutamine contacts are provided by residues 384–387 (LGMQ), Glu-407, and Arg-465. Catalysis depends on residues His-510 and Glu-512.

This sequence belongs to the CTP synthase family. Homotetramer.

The enzyme catalyses UTP + L-glutamine + ATP + H2O = CTP + L-glutamate + ADP + phosphate + 2 H(+). The catalysed reaction is L-glutamine + H2O = L-glutamate + NH4(+). It carries out the reaction UTP + NH4(+) + ATP = CTP + ADP + phosphate + 2 H(+). It functions in the pathway pyrimidine metabolism; CTP biosynthesis via de novo pathway; CTP from UDP: step 2/2. With respect to regulation, allosterically activated by GTP, when glutamine is the substrate; GTP has no effect on the reaction when ammonia is the substrate. The allosteric effector GTP functions by stabilizing the protein conformation that binds the tetrahedral intermediate(s) formed during glutamine hydrolysis. Inhibited by the product CTP, via allosteric rather than competitive inhibition. Functionally, catalyzes the ATP-dependent amination of UTP to CTP with either L-glutamine or ammonia as the source of nitrogen. Regulates intracellular CTP levels through interactions with the four ribonucleotide triphosphates. In Lactobacillus acidophilus (strain ATCC 700396 / NCK56 / N2 / NCFM), this protein is CTP synthase.